Reading from the N-terminus, the 147-residue chain is Flagellar assembly factor FliW (147 aa).

The protein belongs to the FliW family. As to quaternary structure, interacts with translational regulator CsrA and flagellin(s).

It localises to the cytoplasm. Functionally, acts as an anti-CsrA protein, binds CsrA and prevents it from repressing translation of its target genes, one of which is flagellin. Binds to flagellin and participates in the assembly of the flagellum. In Chromobacterium violaceum (strain ATCC 12472 / DSM 30191 / JCM 1249 / CCUG 213 / NBRC 12614 / NCIMB 9131 / NCTC 9757 / MK), this protein is Flagellar assembly factor FliW.